A 77-amino-acid chain; its full sequence is Acyl carrier protein (77 aa).

One can recognise a Carrier domain in the interval 1 to 76 (MSIEERVKKI…SAIDYVTKAN (76 aa)). Serine 36 is subject to O-(pantetheine 4'-phosphoryl)serine.

The protein belongs to the acyl carrier protein (ACP) family. In terms of processing, 4'-phosphopantetheine is transferred from CoA to a specific serine of apo-ACP by AcpS. This modification is essential for activity because fatty acids are bound in thioester linkage to the sulfhydryl of the prosthetic group.

The protein localises to the cytoplasm. It participates in lipid metabolism; fatty acid biosynthesis. Carrier of the growing fatty acid chain in fatty acid biosynthesis. The polypeptide is Acyl carrier protein (Actinobacillus pleuropneumoniae serotype 5b (strain L20)).